The following is a 442-amino-acid chain: 3-dehydroquinate synthase, chloroplastic (442 aa).

The transit peptide at 1-61 (MASSFCPKQA…TTRLKVLATS (61 aa)) directs the protein to the chloroplast. NAD(+)-binding positions include Asn119, 150–152 (DGE), Lys155, 183–188 (GGVIGD), 208–209 (TT), Lys221, Lys230, and 248–251 (TLNT). Glu263 serves as a coordination point for a divalent metal cation. Lys305 contacts NAD(+). Residues His326 and His343 each coordinate a divalent metal cation.

This sequence belongs to the sugar phosphate cyclases superfamily. Dehydroquinate synthase family. As to quaternary structure, homodimer. Requires a divalent metal cation as cofactor. The cofactor is NAD(+). As to expression, highly expressed in roots. Lower expression in stems, flowers and cotyledons. Barely detected in leaves.

It localises to the plastid. The protein localises to the chloroplast. It carries out the reaction 7-phospho-2-dehydro-3-deoxy-D-arabino-heptonate = 3-dehydroquinate + phosphate. It participates in metabolic intermediate biosynthesis; chorismate biosynthesis; chorismate from D-erythrose 4-phosphate and phosphoenolpyruvate: step 2/7. In terms of biological role, catalyzes the second step in the shikimate pathway. This Solanum lycopersicum (Tomato) protein is 3-dehydroquinate synthase, chloroplastic (DHQS).